Here is a 1025-residue protein sequence, read N- to C-terminus: Collagen alpha-1(VI) chain (1025 aa).

A signal peptide spans 1-19 (MRLAHALLPLLLQACWVAT). Residues 20–255 (QDIQGSKAIA…CCSFECQAAR (236 aa)) are N-terminal globular domain. One can recognise a VWFA 1 domain in the interval 36–234 (DLFFVLDTSE…EVISQTIDTI (199 aa)). The N-linked (GlcNAc...) asparagine glycan is linked to N211. Positions 252–588 (QAARGPPGPR…QGPPGHVGPP (337 aa)) are disordered. The triple-helical region stretch occupies residues 256 to 591 (GPPGPRGDPG…PGHVGPPGPD (336 aa)). A Cell attachment site motif is present at residues 261 to 263 (RGD). Basic and acidic residues-rich tracts occupy residues 267–284 (EGER…EAGD) and 300–333 (KGEK…DGMK). 2 consecutive short sequence motifs (cell attachment site) follow at residues 441–443 (RGD) and 477–479 (RGD). N-linked (GlcNAc...) asparagine glycosylation is found at N515 and N536. Over residues 549 to 559 (GEVGDPGEDNN) the composition is skewed to acidic residues. Residues 578 to 588 (PQGPPGHVGPP) show a composition bias toward pro residues. A C-terminal globular domain region spans residues 592 to 1025 (ECEILDIIMK…QTVSRKVALG (434 aa)). 2 VWFA domains span residues 614-802 (DILF…LKNI) and 826-1018 (DITI…YQTV). N801 and N893 each carry an N-linked (GlcNAc...) asparagine glycan.

This sequence belongs to the type VI collagen family. As to quaternary structure, trimers composed of three different chains: alpha-1(VI), alpha-2(VI), and alpha-3(VI) or alpha-4(VI) or alpha-5(VI) or alpha-6(VI). In terms of processing, prolines at the third position of the tripeptide repeating unit (G-X-Y) are hydroxylated in some or all of the chains.

It is found in the secreted. It localises to the extracellular space. Its subcellular location is the extracellular matrix. In terms of biological role, collagen VI acts as a cell-binding protein. The sequence is that of Collagen alpha-1(VI) chain (Col6a1) from Mus musculus (Mouse).